A 420-amino-acid chain; its full sequence is Tyrosine--tRNA ligase (420 aa).

Tyrosine 36 contributes to the L-tyrosine binding site. The short motif at proline 41–histidine 50 is the 'HIGH' region element. L-tyrosine-binding residues include tyrosine 170 and glutamine 174. Positions lysine 231 to serine 235 match the 'KMSKS' region motif. Lysine 234 serves as a coordination point for ATP. Residues threonine 353 to glutamine 420 form the S4 RNA-binding domain.

The protein belongs to the class-I aminoacyl-tRNA synthetase family. TyrS type 1 subfamily. In terms of assembly, homodimer.

The protein resides in the cytoplasm. The enzyme catalyses tRNA(Tyr) + L-tyrosine + ATP = L-tyrosyl-tRNA(Tyr) + AMP + diphosphate + H(+). Its function is as follows. Catalyzes the attachment of tyrosine to tRNA(Tyr) in a two-step reaction: tyrosine is first activated by ATP to form Tyr-AMP and then transferred to the acceptor end of tRNA(Tyr). This chain is Tyrosine--tRNA ligase, found in Staphylococcus aureus (strain bovine RF122 / ET3-1).